The chain runs to 324 residues: MSFTRQLSEMSASELNDAIDDTNFPQAHILSRGRNNSVCSTSSTSGTSSLADRQQNQAEEATAIAGTPVEEVAPAPALVPLAGNQRPRLILKTNGSSPDSDGTQPKTPLTPRTSTTPGHEKCTFHHDLELDHKPPTREALLPDMARSYRLLLGGLGENPDRQGLIKTPERAAKAMLYFTKGYDQSLEDVLNGAVFDEDHDEMVVVKDIEMFSMCEHHLVPFYGKVSIGYLPCNKILGLSKLARIVEIFSRRLQVQERLTKQIAVAVTQAVQPAGVAVVVEGVHMCMVMRGVQKINSKTVTSTMLGVFRDDPKTREEFLNLVNSK.

2 disordered regions span residues 33–59 (GRNN…NQAE) and 79–119 (VPLA…TPGH). Positions 40–49 (STSSTSGTSS) are enriched in low complexity. 2 stretches are compositionally biased toward polar residues: residues 50-59 (LADRQQNQAE) and 93-117 (TNGS…STTP). Zn(2+)-binding residues include Cys-214, His-217, and Cys-285.

This sequence belongs to the GTP cyclohydrolase I family. In terms of assembly, toroid-shaped homodecamer, composed of two pentamers of five dimers. As to expression, isoform B is expressed almost exclusively in adult heads.

It catalyses the reaction GTP + H2O = 7,8-dihydroneopterin 3'-triphosphate + formate + H(+). It functions in the pathway cofactor biosynthesis; 7,8-dihydroneopterin triphosphate biosynthesis; 7,8-dihydroneopterin triphosphate from GTP: step 1/1. Its function is as follows. Isoform B is required for eye pigment production, Isoform C may be required for normal embryonic development and segment pattern formation. The chain is GTP cyclohydrolase 1 (Pu) from Drosophila melanogaster (Fruit fly).